The primary structure comprises 302 residues: 4-hydroxy-tetrahydrodipicolinate synthase (302 aa).

Position 55 (Thr55) interacts with pyruvate. The active-site Proton donor/acceptor is the Tyr144. Residue Lys172 is the Schiff-base intermediate with substrate of the active site. Val214 serves as a coordination point for pyruvate.

It belongs to the DapA family. As to quaternary structure, homotetramer; dimer of dimers.

The protein resides in the cytoplasm. It carries out the reaction L-aspartate 4-semialdehyde + pyruvate = (2S,4S)-4-hydroxy-2,3,4,5-tetrahydrodipicolinate + H2O + H(+). The protein operates within amino-acid biosynthesis; L-lysine biosynthesis via DAP pathway; (S)-tetrahydrodipicolinate from L-aspartate: step 3/4. Its function is as follows. Catalyzes the condensation of (S)-aspartate-beta-semialdehyde [(S)-ASA] and pyruvate to 4-hydroxy-tetrahydrodipicolinate (HTPA). The chain is 4-hydroxy-tetrahydrodipicolinate synthase from Prochlorococcus marinus (strain NATL2A).